A 511-amino-acid polypeptide reads, in one-letter code: GMP synthase [glutamine-hydrolyzing] (511 aa).

A Glutamine amidotransferase type-1 domain is found at 5-195 (LILVLDFGGQ…LYKICGCSGD (191 aa)). Residue cysteine 82 is the Nucleophile of the active site. Active-site residues include histidine 169 and glutamate 171. The GMPS ATP-PPase domain maps to 196–386 (WKMASFIEHS…LGIPEDIVMR (191 aa)). Position 223 to 229 (223 to 229 (SGGVDSS)) interacts with ATP.

As to quaternary structure, homodimer.

It carries out the reaction XMP + L-glutamine + ATP + H2O = GMP + L-glutamate + AMP + diphosphate + 2 H(+). Its pathway is purine metabolism; GMP biosynthesis; GMP from XMP (L-Gln route): step 1/1. In terms of biological role, catalyzes the synthesis of GMP from XMP. The chain is GMP synthase [glutamine-hydrolyzing] from Acetivibrio thermocellus (strain ATCC 27405 / DSM 1237 / JCM 9322 / NBRC 103400 / NCIMB 10682 / NRRL B-4536 / VPI 7372) (Clostridium thermocellum).